We begin with the raw amino-acid sequence, 527 residues long: Methane monooxygenase component A alpha chain (527 aa).

Fe cation is bound by residues glutamate 114, glutamate 144, and histidine 147. Residue cysteine 151 is part of the active site. Fe cation contacts are provided by glutamate 209, glutamate 243, and histidine 246.

It belongs to the TmoA/XamoA family. In terms of assembly, m.capsulatus has two forms of methane monooxygenase, a soluble and a membrane-bound type. The soluble type consists of four components (A to D): protein A, comprising three chains, in an alpha-2, beta-2, gamma-2 configuration, is a nonheme iron protein containing an unusual mu-hydroxo bridge structure at its active site and interacts with both oxygen and methane. Fe cation serves as cofactor.

It carries out the reaction methane + NADH + O2 + H(+) = methanol + NAD(+) + H2O. The catalysed reaction is methane + NADPH + O2 + H(+) = methanol + NADP(+) + H2O. Functionally, responsible for the initial oxygenation of methane to methanol in methanotrophs. It also catalyzes the monohydroxylation of a variety of unactivated alkenes, alicyclic, aromatic and heterocyclic compounds. This Methylococcus capsulatus (strain ATCC 33009 / NCIMB 11132 / Bath) protein is Methane monooxygenase component A alpha chain (mmoX).